The primary structure comprises 435 residues: Cyclin-dependent kinase 15 (435 aa).

A Protein kinase domain is found at 103 to 387 (YLNLEKLGEG…AQEALVHDYF (285 aa)). ATP contacts are provided by residues 109-117 (LGEGSYATV) and K132. D224 (proton acceptor) is an active-site residue.

This sequence belongs to the protein kinase superfamily. CMGC Ser/Thr protein kinase family. CDC2/CDKX subfamily. Mg(2+) is required as a cofactor.

It catalyses the reaction L-seryl-[protein] + ATP = O-phospho-L-seryl-[protein] + ADP + H(+). It carries out the reaction L-threonyl-[protein] + ATP = O-phospho-L-threonyl-[protein] + ADP + H(+). In terms of biological role, serine/threonine-protein kinase that acts like an antiapoptotic protein that counters TRAIL/TNFSF10-induced apoptosis by inducing phosphorylation of BIRC5 at 'Thr-34'. The sequence is that of Cyclin-dependent kinase 15 (CDK15) from Homo sapiens (Human).